A 463-amino-acid polypeptide reads, in one-letter code: Cysteine--tRNA ligase (463 aa).

Cys27 provides a ligand contact to Zn(2+). Residues 29-39 carry the 'HIGH' region motif; the sequence is PTVYGLIHIGN. Residues Cys207, His232, and Glu236 each coordinate Zn(2+). The 'KMSKS' region signature appears at 264–268; that stretch reads KMSKS. Residue Lys267 coordinates ATP.

This sequence belongs to the class-I aminoacyl-tRNA synthetase family. Monomer. Requires Zn(2+) as cofactor.

Its subcellular location is the cytoplasm. The catalysed reaction is tRNA(Cys) + L-cysteine + ATP = L-cysteinyl-tRNA(Cys) + AMP + diphosphate. In Pseudothermotoga lettingae (strain ATCC BAA-301 / DSM 14385 / NBRC 107922 / TMO) (Thermotoga lettingae), this protein is Cysteine--tRNA ligase.